Here is a 388-residue protein sequence, read N- to C-terminus: Succinate--CoA ligase [ADP-forming] subunit beta (388 aa).

Positions 9 to 244 constitute an ATP-grasp domain; sequence KDLLSSYDIA…PSQENVRDVL (236 aa). Residues lysine 46, 53-55, valine 102, and glutamate 107 each bind ATP; that span reads GRG. Mg(2+)-binding residues include asparagine 199 and aspartate 213. Substrate contacts are provided by residues asparagine 264 and 321–323; that span reads GIM.

This sequence belongs to the succinate/malate CoA ligase beta subunit family. Heterotetramer of two alpha and two beta subunits. Mg(2+) is required as a cofactor.

The enzyme catalyses succinate + ATP + CoA = succinyl-CoA + ADP + phosphate. It catalyses the reaction GTP + succinate + CoA = succinyl-CoA + GDP + phosphate. It participates in carbohydrate metabolism; tricarboxylic acid cycle; succinate from succinyl-CoA (ligase route): step 1/1. In terms of biological role, succinyl-CoA synthetase functions in the citric acid cycle (TCA), coupling the hydrolysis of succinyl-CoA to the synthesis of either ATP or GTP and thus represents the only step of substrate-level phosphorylation in the TCA. The beta subunit provides nucleotide specificity of the enzyme and binds the substrate succinate, while the binding sites for coenzyme A and phosphate are found in the alpha subunit. The chain is Succinate--CoA ligase [ADP-forming] subunit beta from Chlamydia felis (strain Fe/C-56) (Chlamydophila felis).